Here is a 260-residue protein sequence, read N- to C-terminus: Adenosylcobinamide-GDP ribazoletransferase (260 aa).

Transmembrane regions (helical) follow at residues 3–23, 36–56, 60–80, 108–128, 133–153, 180–200, 206–226, and 239–259; these read APLW…LPAW, FAPW…LVLI, WPTS…SGGL, VGAS…ASLL, LAPL…LWAM, ALPA…LMIV, MVLM…PELL, and GASV…LLPA.

Belongs to the CobS family. The cofactor is Mg(2+).

Its subcellular location is the cell inner membrane. It carries out the reaction alpha-ribazole + adenosylcob(III)inamide-GDP = adenosylcob(III)alamin + GMP + H(+). It catalyses the reaction alpha-ribazole 5'-phosphate + adenosylcob(III)inamide-GDP = adenosylcob(III)alamin 5'-phosphate + GMP + H(+). It functions in the pathway cofactor biosynthesis; adenosylcobalamin biosynthesis; adenosylcobalamin from cob(II)yrinate a,c-diamide: step 7/7. In terms of biological role, joins adenosylcobinamide-GDP and alpha-ribazole to generate adenosylcobalamin (Ado-cobalamin). Also synthesizes adenosylcobalamin 5'-phosphate from adenosylcobinamide-GDP and alpha-ribazole 5'-phosphate. In Prochlorococcus marinus (strain MIT 9313), this protein is Adenosylcobinamide-GDP ribazoletransferase.